A 104-amino-acid chain; its full sequence is ATP-dependent Clp protease adapter protein ClpS (104 aa).

Residues 1–20 are disordered; it reads MSPDPHEDLGDVLTEPTQKT.

It belongs to the ClpS family. In terms of assembly, binds to the N-terminal domain of the chaperone ClpA.

Functionally, involved in the modulation of the specificity of the ClpAP-mediated ATP-dependent protein degradation. The chain is ATP-dependent Clp protease adapter protein ClpS from Desulfatibacillum aliphaticivorans.